Reading from the N-terminus, the 225-residue chain is UPF0173 metal-dependent hydrolase Fjoh_2786 (225 aa).

Belongs to the UPF0173 family.

In Flavobacterium johnsoniae (strain ATCC 17061 / DSM 2064 / JCM 8514 / BCRC 14874 / CCUG 350202 / NBRC 14942 / NCIMB 11054 / UW101) (Cytophaga johnsonae), this protein is UPF0173 metal-dependent hydrolase Fjoh_2786.